The chain runs to 219 residues: Ribose-5-phosphate isomerase A (219 aa).

Residues 28-31 (TGST), 81-84 (DGAD), and 94-97 (KGGG) each bind substrate. The Proton acceptor role is filled by E103. K121 provides a ligand contact to substrate.

It belongs to the ribose 5-phosphate isomerase family. As to quaternary structure, homodimer.

It carries out the reaction aldehydo-D-ribose 5-phosphate = D-ribulose 5-phosphate. It functions in the pathway carbohydrate degradation; pentose phosphate pathway; D-ribose 5-phosphate from D-ribulose 5-phosphate (non-oxidative stage): step 1/1. Functionally, catalyzes the reversible conversion of ribose-5-phosphate to ribulose 5-phosphate. The polypeptide is Ribose-5-phosphate isomerase A (Methylibium petroleiphilum (strain ATCC BAA-1232 / LMG 22953 / PM1)).